The sequence spans 244 residues: High affinity immunoglobulin epsilon receptor subunit beta (244 aa).

Topologically, residues 1–59 (MDTESNRRANLALPQEPSSVPAFEVLEISPQEVSSGRLLKSASSPPLHTWLTVLKKEQE) are cytoplasmic. Residues 60 to 79 (FLGVTQILTAMICLCFGTVV) traverse the membrane as a helical segment. Residues 80 to 97 (CSVLDISHIEGDIFSSFK) lie on the Extracellular side of the membrane. Residues 98–117 (AGYPFWGAIFFSISGMLSII) form a helical membrane-spanning segment. Over 118 to 130 (SERRNATYLVRGS) the chain is Cytoplasmic. A helical membrane pass occupies residues 131-150 (LGANTASSIAGGTGITILII). Residues 151–180 (NLKKSLAYIHIHSCQKFFETKCFMASFSTE) lie on the Extracellular side of the membrane. The helical transmembrane segment at 181–200 (IVVMMLFLTILGLGSAVSLT) threads the bilayer. The Cytoplasmic segment spans residues 201-244 (ICGAGEELKGNKVPEDRVYEELNIYSATYSELEDPGEMSPPIDL). Phosphotyrosine occurs at positions 219 and 225. Phosphoserine is present on S226. At Y229 the chain carries Phosphotyrosine.

This sequence belongs to the MS4A family. In terms of assembly, tetramer of an alpha chain, a beta chain, and two disulfide linked gamma chains. Binds LILRB1. Interacts with FGR, FES/FPS and LYN. Post-translationally, phosphorylated on tyrosine residues by LYN. In terms of tissue distribution, found on the surface of mast cells and basophils.

It is found in the membrane. In terms of biological role, high affinity receptor that binds to the Fc region of immunoglobulins epsilon. Aggregation of FCER1 by multivalent antigens is required for the full mast cell response, including the release of preformed mediators (such as histamine) by degranulation and de novo production of lipid mediators and cytokines. Also mediates the secretion of important lymphokines. Binding of allergen to receptor-bound IgE leads to cell activation and the release of mediators responsible for the manifestations of allergy. The protein is High affinity immunoglobulin epsilon receptor subunit beta (MS4A2) of Homo sapiens (Human).